The following is a 354-amino-acid chain: Fructose-bisphosphate aldolase (354 aa).

S61 provides a ligand contact to D-glyceraldehyde 3-phosphate. Catalysis depends on D104, which acts as the Proton donor. Zn(2+) contacts are provided by H105, D139, E169, and H221. G222 is a dihydroxyacetone phosphate binding site. H260 contacts Zn(2+). Dihydroxyacetone phosphate contacts are provided by residues 261–263 and 282–285; these read GGS and NIDT.

This sequence belongs to the class II fructose-bisphosphate aldolase family. As to quaternary structure, homodimer. The cofactor is Zn(2+).

The catalysed reaction is beta-D-fructose 1,6-bisphosphate = D-glyceraldehyde 3-phosphate + dihydroxyacetone phosphate. It participates in carbohydrate degradation; glycolysis; D-glyceraldehyde 3-phosphate and glycerone phosphate from D-glucose: step 4/4. Its function is as follows. Catalyzes the aldol condensation of dihydroxyacetone phosphate (DHAP or glycerone-phosphate) with glyceraldehyde 3-phosphate (G3P) to form fructose 1,6-bisphosphate (FBP) in gluconeogenesis and the reverse reaction in glycolysis. The chain is Fructose-bisphosphate aldolase (fba) from Campylobacter jejuni subsp. jejuni serotype O:23/36 (strain 81-176).